The primary structure comprises 377 residues: Anhydro-N-acetylmuramic acid kinase (377 aa).

14 to 21 (GTSLDGVD) is a binding site for ATP.

Belongs to the anhydro-N-acetylmuramic acid kinase family.

It carries out the reaction 1,6-anhydro-N-acetyl-beta-muramate + ATP + H2O = N-acetyl-D-muramate 6-phosphate + ADP + H(+). Its pathway is amino-sugar metabolism; 1,6-anhydro-N-acetylmuramate degradation. The protein operates within cell wall biogenesis; peptidoglycan recycling. Functionally, catalyzes the specific phosphorylation of 1,6-anhydro-N-acetylmuramic acid (anhMurNAc) with the simultaneous cleavage of the 1,6-anhydro ring, generating MurNAc-6-P. Is required for the utilization of anhMurNAc either imported from the medium or derived from its own cell wall murein, and thus plays a role in cell wall recycling. This is Anhydro-N-acetylmuramic acid kinase from Pasteurella multocida (strain Pm70).